A 582-amino-acid polypeptide reads, in one-letter code: WD repeat-containing protein JIP5 (582 aa).

WD repeat units follow at residues 27-68 (KYPE…EAQS), 125-168 (RHKG…VLSK), 177-216 (DKND…SNQL), 265-310 (DQED…LMDQ), and 373-410 (GPAD…LNSD). Disordered regions lie at residues 405–496 (ETLN…DTEL) and 531–582 (TKEQ…FDDL). 2 stretches are compositionally biased toward acidic residues: residues 410-438 (DSDD…DDDV) and 447-485 (EVND…ENVT). Composition is skewed to basic and acidic residues over residues 531–540 (TKEQSTKKAD) and 570–582 (QKHE…FDDL).

The protein belongs to the WD repeat WDR55 family.

Its subcellular location is the nucleus. The protein resides in the nucleolus. The sequence is that of WD repeat-containing protein JIP5 (JIP5) from Debaryomyces hansenii (strain ATCC 36239 / CBS 767 / BCRC 21394 / JCM 1990 / NBRC 0083 / IGC 2968) (Yeast).